A 203-amino-acid chain; its full sequence is METLSQDSLLECQICFNYYSPRRRPKLLDCKHTCCSVCLQQMRTSQKDVRCPWCRGITKLPPGFSVAQLPDDPEVLAVIAIPHASEHTPVFIKLPSNGCYMLPLPISKERALLPGDMGCRLLPGSQQKSVTVVTVPAEQRPLQGGAPQEAVEEEPDRRGVAKSSTWSGVCTVILVACVLVFLLGIVLHNMSCISKRFTVISCG.

The segment at 12–55 (CQICFNYYSPRRRPKLLDCKHTCCSVCLQQMRTSQKDVRCPWCR) adopts an RING-type zinc-finger fold. A necessary for interaction with RRAGA region spans residues 106-165 (ISKERALLPGDMGCRLLPGSQQKSVTVVTVPAEQRPLQGGAPQEAVEEEPDRRGVAKSST). A helical transmembrane segment spans residues 167-187 (SGVCTVILVACVLVFLLGIVL).

It belongs to the RNF152 family. Interacts with RRAGA (inactive GDP-bound form); stimulated by amino acid starvation. Post-translationally, ubiquitinated. Autoubiquitinated in vitro, leading to its degradation by the proteasome.

The protein localises to the lysosome membrane. The enzyme catalyses S-ubiquitinyl-[E2 ubiquitin-conjugating enzyme]-L-cysteine + [acceptor protein]-L-lysine = [E2 ubiquitin-conjugating enzyme]-L-cysteine + N(6)-ubiquitinyl-[acceptor protein]-L-lysine.. Its pathway is protein modification; protein ubiquitination. E3 ubiquitin-protein ligase that acts as a negative regulator of mTORC1 signaling by mediating ubiquitination of RagA/RRAGA and RHEB. Catalyzes 'Lys-63'-linked polyubiquitination of RagA/RRAGA in response to amino acid starvation, thereby regulating mTORC1 signaling. Also mediates monoubiquitination of RHEB, promoting its association with the TSC-TBC complex and subsequent inhibition. Also mediates 'Lys-48'-linked polyubiquitination of target proteins and their subsequent targeting to the proteasome for degradation. Induces apoptosis when overexpressed. The chain is E3 ubiquitin-protein ligase RNF152 from Ailuropoda melanoleuca (Giant panda).